The following is a 132-amino-acid chain: Agouti-signaling protein (132 aa).

The signal sequence occupies residues 1-22; that stretch reads MDVTRLLLATLLVFLCFFTADS. Asn-39 carries N-linked (GlcNAc...) asparagine glycosylation. Residues 62 to 85 are disordered; it reads ISRKEAEKKRSSKKEASMKTVARP. The span at 63–78 shows a compositional bias: basic and acidic residues; that stretch reads SRKEAEKKRSSKKEAS. 5 cysteine pairs are disulfide-bonded: Cys-93/Cys-108, Cys-100/Cys-114, Cys-107/Cys-125, Cys-111/Cys-132, and Cys-116/Cys-123. An Agouti domain is found at 93 to 132; the sequence is CVATRNSCKPPAPACCDPCASCQCRFFRSACSCRVLSLNC.

The protein resides in the secreted. Its function is as follows. Involved in the regulation of melanogenesis. The binding of ASP to MC1R precludes alpha-MSH initiated signaling and thus blocks production of cAMP, leading to a down-regulation of eumelanogenesis (brown/black pigment) and thus increasing synthesis of pheomelanin (yellow/red pigment). The protein is Agouti-signaling protein (ASIP) of Pongo pygmaeus (Bornean orangutan).